The primary structure comprises 165 residues: NADPH-dependent 7-cyano-7-deazaguanine reductase (165 aa).

A disordered region spans residues 1–24; that stretch reads MTTRSTDQTEHLRALGQKTPYPAA. Residue Cys56 is the Thioimide intermediate of the active site. The active-site Proton donor is Asp63. Residues 78-80 and 97-98 each bind substrate; these read VES and ME.

Belongs to the GTP cyclohydrolase I family. QueF type 1 subfamily.

It is found in the cytoplasm. It catalyses the reaction 7-aminomethyl-7-carbaguanine + 2 NADP(+) = 7-cyano-7-deazaguanine + 2 NADPH + 3 H(+). It functions in the pathway tRNA modification; tRNA-queuosine biosynthesis. Functionally, catalyzes the NADPH-dependent reduction of 7-cyano-7-deazaguanine (preQ0) to 7-aminomethyl-7-deazaguanine (preQ1). The polypeptide is NADPH-dependent 7-cyano-7-deazaguanine reductase (Nitratidesulfovibrio vulgaris (strain ATCC 29579 / DSM 644 / CCUG 34227 / NCIMB 8303 / VKM B-1760 / Hildenborough) (Desulfovibrio vulgaris)).